Consider the following 691-residue polypeptide: Putative calcium up-regulated protein I (691 aa).

One can recognise a Ricin B-type lectin domain in the interval 47–174 (SNCYLKEKPQ…NYTSQIWTYN (128 aa)).

It belongs to the cup family.

The chain is Putative calcium up-regulated protein I (cupI) from Dictyostelium discoideum (Social amoeba).